Reading from the N-terminus, the 308-residue chain is Transcriptional adapter 1-1 (308 aa).

Belongs to the TADA1 family. Component of the Spt-Ada-Gcn5 acetyltransferase (SAGA) complex consisting of wda/Taf5L, Saf6, Taf9, Taf10b, Taf12, Ada1, Spt3, Spt7, Spt20, Sf3b3, Sf3b5, Nipped-A/Tra1, a histone acetyltransferase (HAT) module made up of Gcn5, Ada2b (Isoform B), Ada3 and Sgf29, and a deubiquitinase (DUB) module made up of not/nonstop, Sgf11 and e(y)2 tethered to SAGA by Atxn7. Not a component of the Ada2a-containing ATAC complex.

Its subcellular location is the nucleus. Functionally, component of the transcription regulatory complex SAGA, a multiprotein complex that activates transcription by remodeling chromatin and mediating histone acetylation and deubiquitination. The SAGA complex predominantly acetylates histone H3. This Drosophila melanogaster (Fruit fly) protein is Transcriptional adapter 1-1.